Reading from the N-terminus, the 796-residue chain is Potassium transporter 10 (796 aa).

The segment at 1–30 (MAGRVESSIGGGEIDEEGDERGSMWDLDQS) is disordered. Over 1-58 (MAGRVESSIGGGEIDEEGDERGSMWDLDQSLDQPMDEEAGRLRNMYREKKFSAFLLLQ) the chain is Cytoplasmic. Residues 59 to 79 (LSFQSLGVVYGDLGTSPLYVF) form a helical membrane-spanning segment. Topologically, residues 80–95 (YNTFPRGIKDPEDIIG) are extracellular. Residues 96 to 116 (ALSLIIYSLTLIPLLKYVFVV) traverse the membrane as a helical segment. The Cytoplasmic portion of the chain corresponds to 117–184 (CKANDNGQGG…ENGTSRKNAL (68 aa)). The helical transmembrane segment at 185-205 (LILVLVGTCMVIGDGILTPAI) threads the bilayer. Residues 206–217 (SVLSAAGGLRVN) are Extracellular-facing. Residues 218-238 (LPHINNGIVVVVAVVILVSLF) form a helical membrane-spanning segment. Topologically, residues 239 to 248 (SVQHYGTDRV) are cytoplasmic. A helical transmembrane segment spans residues 249–269 (GWLFAPIVFLWFLFIASIGMF). Residues 270–298 (NIWKHDPSVLKAFSPVYIFRYFKRGGQDR) are Extracellular-facing. The chain crosses the membrane as a helical span at residues 299–319 (WTSLGGIMLSITGIEALFADL). Over 320–321 (SH) the chain is Cytoplasmic. A helical transmembrane segment spans residues 322–342 (FPVSAVQFAFTVIVFPCLLLA). Residues 343–368 (YSGQAAYLRKYPHHVEDAFYQSIPKR) lie on the Extracellular side of the membrane. A helical membrane pass occupies residues 369–389 (VYWPMFIIATAAAIVASQATI). Residues 390–420 (SATFSLIKQALAHGCFPRVKVVHTSRKFLGQ) are Cytoplasmic-facing. A helical membrane pass occupies residues 421-441 (IYVPDINWILMILCIAVTAGF). Topologically, residues 442-453 (KNQNQIGNAYGT) are extracellular. The chain crosses the membrane as a helical span at residues 454 to 474 (AVVIVMLVTTLLMMLIMILVW). The Cytoplasmic segment spans residues 475–480 (RCHWVL). Residues 481–501 (VLLFTLLSLVVECTYFSAVLF) form a helical membrane-spanning segment. Topologically, residues 502-505 (KVNQ) are extracellular. A helical transmembrane segment spans residues 506-526 (GGWVPLVIAAAFLVIMYVWHY). At 527–796 (GTLKRYEFEM…LLNVGQIFYV (270 aa)) the chain is on the cytoplasmic side.

The protein belongs to the HAK/KUP transporter (TC 2.A.72.3) family.

It is found in the cell membrane. Its function is as follows. Putative potassium transporter. The sequence is that of Potassium transporter 10 (POT10) from Arabidopsis thaliana (Mouse-ear cress).